The primary structure comprises 528 residues: Facilitator of iron transport 1 (528 aa).

A signal peptide spans 1–18; sequence MKLSSAFVLSAITVAALG. 3 tandem repeats follow at residues 20 to 98, 99 to 168, and 169 to 233. A 4 X approximate tandem repeats region spans residues 20-274; it reads SITTTITATK…ERAPASTVAT (255 aa). 3 disordered regions span residues 79-100, 145-172, and 214-234; these read SIVEPSTSAQGTSADEGSGSSI, AAETSVAEPSTSAQGTSADEGSGSSITT, and ASPVTSVAEPSASTDEGSGSS. Polar residues-rich tracts occupy residues 81-93 and 145-163; these read VEPSTSAQGTSAD and AAETSVAEPSTSAQGTSAD. The 1-4; truncated repeat unit spans residues 234 to 274; the sequence is SITTTITATKNGHVYTKTVTQDATFVWTGEGERAPASTVAT. Tandem repeats lie at residues 289-294, 295-300, 301-306, 307-312, 313-318, 319-324, 325-330, 331-336, 337-342, 343-348, 349-353, and 354-359. The segment at 289–359 is 12 X 6 AA approximate tandem repeats, Ser/Thr-rich; the sequence is SIVEASSAVE…AVETSAVETS (71 aa). Composition is skewed to low complexity over residues 298–388 and 398–435; these read ETSS…QASS and TSSVVPTFSSTTTENSSNSKSTSAVVASTTTSSESSAT. The disordered stretch occupies residues 298–471; that stretch reads ETSSAAETSS…SNNWSSSSSA (174 aa). N412 carries an N-linked (GlcNAc...) asparagine glycan. Over residues 446 to 457 the composition is skewed to polar residues; the sequence is YTESSSRDAQSV. Low complexity predominate over residues 462–471; it reads SNNWSSSSSA. An N-linked (GlcNAc...) asparagine glycan is attached at N464. Residue 488 to 495 participates in ATP binding; sequence GIFTNGKS. N503 carries N-linked (GlcNAc...) asparagine glycosylation. G506 is lipidated: GPI-anchor amidated glycine. Positions 507 to 528 are cleaved as a propeptide — removed in mature form; that stretch reads AADSIAAGTGLMGAALAAVIFL.

In terms of processing, the GPI-anchor is attached to the protein in the endoplasmic reticulum and serves to target the protein to the cell surface. There, the glucosamine-inositol phospholipid moiety is cleaved off and the GPI-modified mannoprotein is covalently attached via its lipidless GPI glycan remnant to the 1,6-beta-glucan of the outer cell wall layer.

Its subcellular location is the secreted. The protein resides in the cell wall. The protein localises to the membrane. Its function is as follows. Involved in the uptake of non-siderophore sources of iron and the siderophores ferrioxamine B and ferrichrome. Has a role in the retention of iron in the cell wall and periplasmic space. The chain is Facilitator of iron transport 1 (FIT1) from Saccharomyces cerevisiae (strain ATCC 204508 / S288c) (Baker's yeast).